Reading from the N-terminus, the 435-residue chain is Tol-Pal system protein TolB (435 aa).

A signal peptide spans 1-20; that stretch reads MRKIIAGVFIFVFLISNLYA.

It belongs to the TolB family. In terms of assembly, the Tol-Pal system is composed of five core proteins: the inner membrane proteins TolA, TolQ and TolR, the periplasmic protein TolB and the outer membrane protein Pal. They form a network linking the inner and outer membranes and the peptidoglycan layer.

Its subcellular location is the periplasm. In terms of biological role, part of the Tol-Pal system, which plays a role in outer membrane invagination during cell division and is important for maintaining outer membrane integrity. The chain is Tol-Pal system protein TolB from Francisella tularensis subsp. holarctica (strain LVS).